The sequence spans 272 residues: Catabolic 3-dehydroquinate dehydratase (272 aa).

3-dehydroquinate contacts are provided by residues 66-68 (EFR) and R102. Residue H163 is the Proton donor/acceptor of the active site. The active-site Schiff-base intermediate with substrate is the K190. R232, S251, and Q255 together coordinate 3-dehydroquinate.

It belongs to the type-I 3-dehydroquinase family.

The catalysed reaction is 3-dehydroquinate = 3-dehydroshikimate + H2O. The protein operates within aromatic compound metabolism; 3,4-dihydroxybenzoate biosynthesis; 3,4-dihydroxybenzoate from 3-dehydroquinate: step 1/2. Its function is as follows. Involved in the biosynthesis of protocatechuate. Catalyzes the catabolic dehydration of 3-dehydroquinate (DHQ) to yield 3-dehydroshikimate. The sequence is that of Catabolic 3-dehydroquinate dehydratase from Acinetobacter baylyi (strain ATCC 33305 / BD413 / ADP1).